A 385-amino-acid polypeptide reads, in one-letter code: GTPase Obg (385 aa).

The Obg domain occupies 1–159 (MKFVDEATIL…REIQLELMLL (159 aa)). Positions 160–333 (ADVGMLGLPN…LCWDVMAFIN (174 aa)) constitute an OBG-type G domain. GTP contacts are provided by residues 166 to 173 (GLPNAGKS), 191 to 195 (FTTLV), 213 to 216 (DIPG), 283 to 286 (NKAD), and 314 to 316 (SAA). The Mg(2+) site is built by Ser173 and Thr193. Over residues 362–379 (QQEEAEETLDDDWDEDGV) the composition is skewed to acidic residues. The disordered stretch occupies residues 362 to 385 (QQEEAEETLDDDWDEDGVETIYQR).

This sequence belongs to the TRAFAC class OBG-HflX-like GTPase superfamily. OBG GTPase family. Monomer. The cofactor is Mg(2+).

It is found in the cytoplasm. Its function is as follows. An essential GTPase which binds GTP, GDP and possibly (p)ppGpp with moderate affinity, with high nucleotide exchange rates and a fairly low GTP hydrolysis rate. Plays a role in control of the cell cycle, stress response, ribosome biogenesis and in those bacteria that undergo differentiation, in morphogenesis control. The polypeptide is GTPase Obg (Sodalis glossinidius (strain morsitans)).